Consider the following 198-residue polypeptide: Thymidine kinase (198 aa).

ATP-binding positions include 9–16 and 87–90; these read STMNAGKS and DEAQ. Glutamate 88 functions as the Proton acceptor in the catalytic mechanism. The Zn(2+) site is built by cysteine 145, cysteine 147, cysteine 182, and histidine 185.

This sequence belongs to the thymidine kinase family. As to quaternary structure, homotetramer.

Its subcellular location is the cytoplasm. The enzyme catalyses thymidine + ATP = dTMP + ADP + H(+). In Ruegeria pomeroyi (strain ATCC 700808 / DSM 15171 / DSS-3) (Silicibacter pomeroyi), this protein is Thymidine kinase.